Consider the following 389-residue polypeptide: GKMLAAVSRVLSGVAQKPASRVLVASRTFANDATFEIKKCDLHRLEEGPPVTTVLTREDGLKYYRMMQTVRRMELKADQLYKQKIIRGFCHLCDGQEACCVGLEAGINPTDHLITAYRAHGFTFTRGLSVREILAELTGRRGGCGKGKGGSMHMYAKNFYGGNGIVGAQVPLGAGIALACKYNGKDEVCLTLYGDGAANQGQIFEAYNMAALWKLPCVFICENNRYGMGTSVERAAASTDYYKRGDFIPGLRVDGMDILCVREATRFAAAYCRSGKGPILMELQTYRYHGHSMSDPGVSYRTREEIQEVRSKSDPIMLLKDRMVNSNLASVEELKEIDVEVRKEIEDAAQFATADPEPPLEELGYHIYCNDPPFEVRGANQWIKFKSIS.

Residues 1–28 constitute a mitochondrion transit peptide; it reads GKMLAAVSRVLSGVAQKPASRVLVASRT. Lys62 is modified (N6-acetyllysine; alternate). Lys62 bears the N6-succinyllysine; alternate mark. Pyruvate contacts are provided by His91, Tyr117, Arg118, Ala156, Gly164, Val166, Asp195, Gly196, Ala197, Asn224, and Tyr226. The thiamine diphosphate site is built by Tyr117 and Arg118. Thiamine diphosphate is bound by residues Gly164, Val166, Asp195, Gly196, Ala197, and Asn224. Position 195 (Asp195) interacts with Mg(2+). Mg(2+) is bound by residues Asn224 and Tyr226. Ser231 bears the Phosphoserine; by PDK1 mark. Position 243 is an N6-acetyllysine; alternate (Lys243). N6-succinyllysine; alternate is present on Lys243. Residue Lys276 is modified to N6-succinyllysine. His291 contacts thiamine diphosphate. Position 292 is a phosphoserine; by PDK1, PDK2, PDK3 and PDK4 (Ser292). The residue at position 294 (Ser294) is a Phosphoserine. Residue Ser299 is modified to Phosphoserine; by PDK1, PDK2, PDK3 and PDK4. Tyr300 is modified (phosphotyrosine). An N6-acetyllysine; alternate modification is found at Lys312. The residue at position 312 (Lys312) is an N6-succinyllysine; alternate. Residues Lys320 and Lys335 each carry the N6-acetyllysine modification. Lys384 bears the N6-succinyllysine mark.

As to quaternary structure, heterotetramer of two PDHA1 and two PDHB subunits. The heterotetramer interacts with DLAT, and is part of the multimeric pyruvate dehydrogenase complex that contains multiple copies of pyruvate dehydrogenase (E1), dihydrolipoamide acetyltransferase (DLAT, E2) and lipoamide dehydrogenase (DLD, E3). These subunits are bound to an inner core composed of about 48 DLAT and 12 PDHX molecules. Thiamine diphosphate serves as cofactor. Requires Mg(2+) as cofactor. In terms of processing, phosphorylation at Ser-231, Ser-292 and Ser-299 by PDK family kinases inactivates the enzyme; for this phosphorylation at a single site is sufficient. Phosphorylation at Ser-292 interferes with access to active site, and thereby inactivates the enzyme. Dephosphorylation at all three sites, i.e. at Ser-231, Ser-292 and Ser-299, is required for reactivation. Post-translationally, acetylation alters the phosphorylation pattern. Deacetylated by SIRT3.

The protein resides in the mitochondrion matrix. The catalysed reaction is N(6)-[(R)-lipoyl]-L-lysyl-[protein] + pyruvate + H(+) = N(6)-[(R)-S(8)-acetyldihydrolipoyl]-L-lysyl-[protein] + CO2. Its activity is regulated as follows. Pyruvate dehydrogenase activity is inhibited by phosphorylation of PDHA1; it is reactivated by dephosphorylation. Functionally, the pyruvate dehydrogenase complex catalyzes the overall conversion of pyruvate to acetyl-CoA and CO(2), and thereby links the glycolytic pathway to the tricarboxylic cycle. This is Pyruvate dehydrogenase E1 component subunit alpha, somatic form, mitochondrial (PDHA1) from Sus scrofa (Pig).